A 102-amino-acid polypeptide reads, in one-letter code: Large ribosomal subunit protein bL21 (102 aa).

The protein belongs to the bacterial ribosomal protein bL21 family. Part of the 50S ribosomal subunit. Contacts protein L20.

Its function is as follows. This protein binds to 23S rRNA in the presence of protein L20. The sequence is that of Large ribosomal subunit protein bL21 from Campylobacter hominis (strain ATCC BAA-381 / DSM 21671 / CCUG 45161 / LMG 19568 / NCTC 13146 / CH001A).